A 60-amino-acid chain; its full sequence is Metallothionein (60 aa).

Residues 1–28 form a beta region; that stretch reads MDPCECSKGGTCNCGGSCTCTNCSCTTC. 20 residues coordinate a divalent metal cation: C4, C6, C12, C14, C18, C20, C23, C25, C28, C32, C33, C35, C36, C40, C43, C47, C49, C54, C58, and C59. The alpha stretch occupies residues 29–60; sequence KKSCCPCCPSGCPKCASGCVCKGKTCDAACCQ.

Belongs to the metallothionein superfamily. Type 1 family.

In terms of biological role, metallothioneins have a high content of cysteine residues that bind various heavy metals. The protein is Metallothionein (mt) of Perca fluviatilis (European perch).